The chain runs to 366 residues: Homoserine O-acetyltransferase (366 aa).

An AB hydrolase-1 domain is found at 47–349 (NAILICHALS…SGEGHDSFLL (303 aa)). S153 functions as the Nucleophile in the catalytic mechanism. R221 provides a ligand contact to substrate. Catalysis depends on residues D311 and H344. D345 provides a ligand contact to substrate.

Belongs to the AB hydrolase superfamily. MetX family. In terms of assembly, homodimer.

Its subcellular location is the cytoplasm. The enzyme catalyses L-homoserine + acetyl-CoA = O-acetyl-L-homoserine + CoA. Its pathway is amino-acid biosynthesis; L-methionine biosynthesis via de novo pathway; O-acetyl-L-homoserine from L-homoserine: step 1/1. Functionally, transfers an acetyl group from acetyl-CoA to L-homoserine, forming acetyl-L-homoserine. The sequence is that of Homoserine O-acetyltransferase from Leptospira interrogans serogroup Icterohaemorrhagiae serovar copenhageni (strain Fiocruz L1-130).